Here is a 285-residue protein sequence, read N- to C-terminus: Undecaprenyl-diphosphatase (285 aa).

7 helical membrane-spanning segments follow: residues 3 to 23 (ILLL…EFLP), 41 to 61 (GEIV…AVIW), 87 to 107 (LLIA…LIKE), 109 to 129 (LFHP…ILWV), 197 to 217 (TEFS…YSLI), 226 to 246 (GDLP…LVCI), and 260 to 280 (VFAW…WGGW).

This sequence belongs to the UppP family.

It localises to the cell inner membrane. The enzyme catalyses di-trans,octa-cis-undecaprenyl diphosphate + H2O = di-trans,octa-cis-undecaprenyl phosphate + phosphate + H(+). In terms of biological role, catalyzes the dephosphorylation of undecaprenyl diphosphate (UPP). Confers resistance to bacitracin. This Methylibium petroleiphilum (strain ATCC BAA-1232 / LMG 22953 / PM1) protein is Undecaprenyl-diphosphatase.